The sequence spans 100 residues: Protein RADIALIS-like 1 (100 aa).

Residues 9–64 form the SANT domain; sequence QSSGSWTAKQNKAFEQALATYDQDTPNRWQNVAKVVGGKTTEEVKRHYELLVQDIN. A disordered region spans residues 73–100; the sequence is FPNYRTSGGCTNGRLSQEEKRMRNMRLQ. Positions 76–87 are enriched in polar residues; that stretch reads YRTSGGCTNGRL.

It is found in the nucleus. Its function is as follows. Probable transcription factor. The polypeptide is Protein RADIALIS-like 1 (RL1) (Arabidopsis thaliana (Mouse-ear cress)).